We begin with the raw amino-acid sequence, 551 residues long: Probable CoA ligase CCL5 (551 aa).

Residues 204–212 (SSGTTGASK), 345–350 (QGYGLT), Asp431, 443–446 (VVDR), and Lys537 contribute to the ATP site. An SBD1 region spans residues 274–345 (EIHEMLSAIE…ENYPTVSILQ (72 aa)). The tract at residues 346 to 410 (GYGLTESTGI…LRGPTIMKGY (65 aa)) is SBD2.

The protein belongs to the ATP-dependent AMP-binding enzyme family. In terms of tissue distribution, mostly expressed at low levels in glandular trichomes (lupulin glands) after flowering, and, to a lower extent, in stems, leaves, cones and flowers.

The protein resides in the cytoplasm. Its subcellular location is the cytosol. The chain is Probable CoA ligase CCL5 from Humulus lupulus (European hop).